The sequence spans 673 residues: DNA ligase (673 aa).

Residues 34–38 (DAEYD), 83–84 (SL), and glutamate 116 contribute to the NAD(+) site. Lysine 118 (N6-AMP-lysine intermediate) is an active-site residue. Residues arginine 139, glutamate 176, lysine 293, and lysine 317 each contribute to the NAD(+) site. Zn(2+) is bound by residues cysteine 411, cysteine 414, cysteine 429, and cysteine 435. Residues 595 to 673 (NQQNPFFGKT…EDEFLKWVNS (79 aa)) form the BRCT domain.

It belongs to the NAD-dependent DNA ligase family. LigA subfamily. Mg(2+) serves as cofactor. It depends on Mn(2+) as a cofactor.

It carries out the reaction NAD(+) + (deoxyribonucleotide)n-3'-hydroxyl + 5'-phospho-(deoxyribonucleotide)m = (deoxyribonucleotide)n+m + AMP + beta-nicotinamide D-nucleotide.. DNA ligase that catalyzes the formation of phosphodiester linkages between 5'-phosphoryl and 3'-hydroxyl groups in double-stranded DNA using NAD as a coenzyme and as the energy source for the reaction. It is essential for DNA replication and repair of damaged DNA. The chain is DNA ligase from Legionella pneumophila subsp. pneumophila (strain Philadelphia 1 / ATCC 33152 / DSM 7513).